A 490-amino-acid chain; its full sequence is Glutamate--tRNA ligase (490 aa).

The short motif at 9-19 (PSPTGLQHIGG) is the 'HIGH' region element. The 'KMSKS' region signature appears at 251-255 (KLSKR). Lys-254 serves as a coordination point for ATP.

This sequence belongs to the class-I aminoacyl-tRNA synthetase family. Glutamate--tRNA ligase type 1 subfamily. As to quaternary structure, monomer.

The protein localises to the cytoplasm. The catalysed reaction is tRNA(Glu) + L-glutamate + ATP = L-glutamyl-tRNA(Glu) + AMP + diphosphate. Functionally, catalyzes the attachment of glutamate to tRNA(Glu) in a two-step reaction: glutamate is first activated by ATP to form Glu-AMP and then transferred to the acceptor end of tRNA(Glu). This Borreliella afzelii (strain PKo) (Borrelia afzelii) protein is Glutamate--tRNA ligase.